Consider the following 198-residue polypeptide: N-acetyltransferase 9-like protein (198 aa).

Residues 34 to 178 form the N-acetyltransferase domain; that stretch reads EEIRRLTGSE…KEITMELPGE (145 aa).

It belongs to the acetyltransferase family. GNAT subfamily.

The chain is N-acetyltransferase 9-like protein from Caenorhabditis briggsae.